Reading from the N-terminus, the 373-residue chain is Flagellar P-ring protein (373 aa).

The signal sequence occupies residues 1-28 (MPSVSAVILKLAAAALSALLLSGVAANA).

The protein belongs to the FlgI family. In terms of assembly, the basal body constitutes a major portion of the flagellar organelle and consists of four rings (L,P,S, and M) mounted on a central rod.

The protein localises to the periplasm. Its subcellular location is the bacterial flagellum basal body. Functionally, assembles around the rod to form the L-ring and probably protects the motor/basal body from shearing forces during rotation. The chain is Flagellar P-ring protein from Rhodopseudomonas palustris (strain HaA2).